The sequence spans 525 residues: uncharacterized protein (525 aa).

A run of 6 helical transmembrane segments spans residues Phe-7–Ile-29, Leu-34–Leu-51, Gly-64–Phe-82, Leu-92–Phe-114, Val-121–Gly-143, and Leu-148–Ala-170. RCK C-terminal domains lie at Lys-178–Val-257 and Glu-259–Asp-341. 5 helical membrane passes run Ala-351–Ala-370, Gly-374–His-396, Leu-416–Val-438, Leu-443–Trp-465, and Ser-502–Leu-524.

Belongs to the AAE transporter (TC 2.A.81) family.

It is found in the cell membrane. This is an uncharacterized protein from Cutibacterium acnes (strain DSM 16379 / KPA171202) (Propionibacterium acnes).